Reading from the N-terminus, the 146-residue chain is Snaclec mamushigin subunit beta (146 aa).

The first 23 residues, 1–23 (MGRFIFLSFGLLVVFVSLSGTGA), serve as a signal peptide directing secretion. Intrachain disulfides connect C25-C36, C53-C142, and C119-C134. One can recognise a C-type lectin domain in the interval 32–143 (YEGHCYRVFQ…CSRTYNVVCK (112 aa)).

Heterodimer of subunits alpha and beta; disulfide-linked. Expressed by the venom gland.

It localises to the secreted. In terms of biological role, binds to platelet GPIbalpha (GP1BA) and enhances platelet aggregation at low-shear stress. At high-shear stress, blocks platelet aggregation in a dose-dependent manner. The chain is Snaclec mamushigin subunit beta from Gloydius blomhoffii (Mamushi).